The following is a 372-amino-acid chain: 4-hydroxy-3-methylbut-2-en-1-yl diphosphate synthase (flavodoxin) (372 aa).

Cysteine 270, cysteine 273, cysteine 305, and glutamate 312 together coordinate [4Fe-4S] cluster.

The protein belongs to the IspG family. It depends on [4Fe-4S] cluster as a cofactor.

It carries out the reaction (2E)-4-hydroxy-3-methylbut-2-enyl diphosphate + oxidized [flavodoxin] + H2O + 2 H(+) = 2-C-methyl-D-erythritol 2,4-cyclic diphosphate + reduced [flavodoxin]. It participates in isoprenoid biosynthesis; isopentenyl diphosphate biosynthesis via DXP pathway; isopentenyl diphosphate from 1-deoxy-D-xylulose 5-phosphate: step 5/6. Converts 2C-methyl-D-erythritol 2,4-cyclodiphosphate (ME-2,4cPP) into 1-hydroxy-2-methyl-2-(E)-butenyl 4-diphosphate. In Aliivibrio salmonicida (strain LFI1238) (Vibrio salmonicida (strain LFI1238)), this protein is 4-hydroxy-3-methylbut-2-en-1-yl diphosphate synthase (flavodoxin).